Reading from the N-terminus, the 524-residue chain is Probable 1,3-beta-glucanosyltransferase GAS3 (524 aa).

The N-terminal stretch at 1 to 21 (MQLSKSILLAALAATPSLVNA) is a signal peptide. The cysteines at positions 78 and 107 are disulfide-linked. (1,3-beta-D-glucosyl)n contacts are provided by Tyr-96, Asn-168, and Glu-169. Glu-169 serves as the catalytic Proton donor. Asn-201 is a glycosylation site (N-linked (GlcNAc...) asparagine). 2 residues coordinate (1,3-beta-D-glucosyl)n: Asp-212 and Arg-217. 2 disulfide bridges follow: Cys-226/Cys-369 and Cys-254/Cys-286. The N-linked (GlcNAc...) asparagine glycan is linked to Asn-269. Glu-283 (nucleophile) is an active-site residue. Tyr-315 serves as a coordination point for (1,3-beta-D-glucosyl)n. Asn-350, Asn-385, Asn-404, and Asn-422 each carry an N-linked (GlcNAc...) asparagine glycan. The interval 461-498 (TSQSSSRSLTSSTSPSSSTGSSSSTGSSSASSSSKSKG) is disordered. Gly-498 carries the GPI-anchor amidated glycine lipid modification. A propeptide spans 499–524 (VGNIVNVSFSQSGYLALFAGLISALL) (removed in mature form).

The protein belongs to the glycosyl hydrolase 72 family. The GPI-anchor is attached to the protein in the endoplasmic reticulum and serves to target the protein to the cell surface. There, the glucosamine-inositol phospholipid moiety is cleaved off and the GPI-modified mannoprotein is covalently attached via its lipidless GPI glycan remnant to the 1,6-beta-glucan of the outer cell wall layer. Post-translationally, N-glycosylated.

The protein resides in the secreted. Its subcellular location is the cell wall. It is found in the membrane. Splits internally a 1,3-beta-glucan molecule and transfers the newly generated reducing end (the donor) to the non-reducing end of another 1,3-beta-glucan molecule (the acceptor) forming a 1,3-beta linkage, resulting in the elongation of 1,3-beta-glucan chains in the cell wall. Involved in cell wall biosynthesis and morphogenesis. This is Probable 1,3-beta-glucanosyltransferase GAS3 (GAS3) from Saccharomyces cerevisiae (strain ATCC 204508 / S288c) (Baker's yeast).